Consider the following 224-residue polypeptide: 7-cyano-7-deazaguanine synthase (224 aa).

8-18 contributes to the ATP binding site; that stretch reads LSGGMDSAAVI. Residues Cys186, Cys196, Cys199, and Cys202 each contribute to the Zn(2+) site.

Belongs to the QueC family. It depends on Zn(2+) as a cofactor.

The catalysed reaction is 7-carboxy-7-deazaguanine + NH4(+) + ATP = 7-cyano-7-deazaguanine + ADP + phosphate + H2O + H(+). Its pathway is purine metabolism; 7-cyano-7-deazaguanine biosynthesis. In terms of biological role, catalyzes the ATP-dependent conversion of 7-carboxy-7-deazaguanine (CDG) to 7-cyano-7-deazaguanine (preQ(0)). The chain is 7-cyano-7-deazaguanine synthase from Xanthomonas euvesicatoria pv. vesicatoria (strain 85-10) (Xanthomonas campestris pv. vesicatoria).